The chain runs to 304 residues: E3 ubiquitin-protein ligase RNF144B (304 aa).

The interval 27–245 (PLVTCKLCLC…YDRGPCRNKL (219 aa)) is TRIAD supradomain. 14 residues coordinate Zn(2+): Cys-31, Cys-34, Cys-54, Cys-57, Cys-122, Cys-127, Cys-146, Cys-149, Cys-154, Cys-157, His-162, Cys-167, Cys-194, and Cys-197. Residues 31-81 (CKLCLCEQSLDKMTTLQECRCIFCTACLKQYMQLAIREGCGSPITCPDMVC) form an RING-type 1 zinc finger. Residues 102–167 (QLYQRLKFER…KDAWHAEVSC (66 aa)) form an IBR-type zinc finger. The segment at 194–223 (CPVCRVYIERNEGCAQMMCKNCKHTFCWYC) adopts an RING-type 2; atypical zinc-finger fold. The active site involves Cys-207. The Zn(2+) site is built by Cys-212, Cys-215, Cys-220, Cys-223, His-235, and Cys-241. The helical transmembrane segment at 259–279 (VVGILVGLGIIALVTSPLLLL) threads the bilayer.

It belongs to the RBR family. RNF144 subfamily. Interacts with UBE2L3, UBE2L6 and LCMT2, as well as with BAX. Interacts with TBK1; this interaction inhibits TBK1 phosphorylation and 'Lys-63'-linked polyubiquitination. Post-translationally, auto-ubiquitinated.

The protein resides in the mitochondrion membrane. It localises to the cytoplasm. It carries out the reaction [E2 ubiquitin-conjugating enzyme]-S-ubiquitinyl-L-cysteine + [acceptor protein]-L-lysine = [E2 ubiquitin-conjugating enzyme]-L-cysteine + [acceptor protein]-N(6)-ubiquitinyl-L-lysine.. It participates in protein modification; protein ubiquitination. In terms of biological role, E3 ubiquitin-protein ligase which accepts ubiquitin from E2 ubiquitin-conjugating enzymes UBE2L3 and UBE2L6 in the form of a thioester and then directly transfers the ubiquitin to targeted substrates such as LCMT2, thereby promoting their degradation. Induces apoptosis via a p53/TP53-dependent but caspase-independent mechanism. Plays a crucial role in maintaining the genomic stability by controlling the degradation of multiple proteins involved in mitotic progression and DNA damage. Regulates epithelial homeostasis by mediating degradation of CDKN1A and isoform 2 of TP63. Plays a regulatory role in innate immunity by negatively regulating IRF3 activation and IFN-beta production. Mechanistically, inhibits TBK1 phosphorylation and 'Lys-63'-linked polyubiquitination independently of its E3 ligase activity. Alternatively, promotes 'Lys-27' and 'Lys-33'-linked ubiquitination of IFIH1/MDA5, promoting selective autophagic degradation of IFIH1/MDA5 to inhibit antiviral response. This chain is E3 ubiquitin-protein ligase RNF144B (RNF144B), found in Bos taurus (Bovine).